Consider the following 335-residue polypeptide: Nucleoid-associated protein YejK (335 aa).

The protein belongs to the YejK family.

Its subcellular location is the cytoplasm. The protein localises to the nucleoid. The chain is Nucleoid-associated protein YejK from Salmonella enteritidis PT4 (strain P125109).